A 292-amino-acid chain; its full sequence is 4-hydroxy-tetrahydrodipicolinate synthase (292 aa).

Thr-45 serves as a coordination point for pyruvate. Tyr-133 serves as the catalytic Proton donor/acceptor. The active-site Schiff-base intermediate with substrate is the Lys-161. Ile-203 contacts pyruvate.

This sequence belongs to the DapA family. As to quaternary structure, homotetramer; dimer of dimers.

The protein resides in the cytoplasm. The catalysed reaction is L-aspartate 4-semialdehyde + pyruvate = (2S,4S)-4-hydroxy-2,3,4,5-tetrahydrodipicolinate + H2O + H(+). It participates in amino-acid biosynthesis; L-lysine biosynthesis via DAP pathway; (S)-tetrahydrodipicolinate from L-aspartate: step 3/4. Catalyzes the condensation of (S)-aspartate-beta-semialdehyde [(S)-ASA] and pyruvate to 4-hydroxy-tetrahydrodipicolinate (HTPA). In Klebsiella pneumoniae subsp. pneumoniae (strain ATCC 700721 / MGH 78578), this protein is 4-hydroxy-tetrahydrodipicolinate synthase.